The following is a 456-amino-acid chain: MITDQNSKPQQGELPTTHIDALTNSFSQFLRIEATSGAVLLLATVVALTLSNSPWSDGFRSLWETPIGIQIGAFQFLRSLRDLINDGLMTLFFFIVALEIKREVVLGELRNPRMVALSVVAAAGGMLVPMGLYLALQHGQPGQHGWGVVMPTDTAFVIGCLALLGSRVPPGLRVFLLSLAVVDDLAAILVVAVGYSRSIDWTALALGAVGLVIIRGMALLGVRNIRVYFLAGAIIWLAVNASGIHATIVGVILGLMTPTAGWVSDQRLGEILRKVLSYPPGDHWSGDTEDNRALQVAGIAVRETLSPVERLEAMLHPWVAFGVMPLFALANAGVPITIKGLINPVSLAVMAGFVLGKPIGVTAFAWLGVRTGVAIRPAGLTWGGLVGGALLTGIGFTMALFIAGQAFQDATLNAAKLGILAASVVSSVAGLTLLCALPRSDGTPMFRGRRGGGEHP.

Transmembrane regions (helical) follow at residues 32-52 (IEAT…TLSN), 87-107 (GLMT…VVLG), 114-134 (MVAL…GLYL), 145-165 (GWGV…ALLG), 174-194 (VFLL…VAVG), 202-222 (TALA…LLGV), 233-253 (AIIW…GVIL), 318-338 (WVAF…PITI), 347-367 (LAVM…FAWL), 382-402 (WGGL…ALFI), and 417-437 (LGIL…LCAL).

The protein belongs to the NhaA Na(+)/H(+) (TC 2.A.33) antiporter family.

The protein localises to the cell inner membrane. It carries out the reaction Na(+)(in) + 2 H(+)(out) = Na(+)(out) + 2 H(+)(in). Its function is as follows. Na(+)/H(+) antiporter that extrudes sodium in exchange for external protons. This is Na(+)/H(+) antiporter NhaA 3 from Acidiphilium cryptum (strain JF-5).